The chain runs to 30 residues: Protamine-YII (30 aa).

A disordered region spans residues 1–30 (PRRRTRRASRPVRRRRPRRVSRRRRARRRR).

In terms of tissue distribution, testis.

The protein resides in the nucleus. Its subcellular location is the chromosome. Protamines substitute for histones in the chromatin of sperm during the haploid phase of spermatogenesis. They compact sperm DNA into a highly condensed, stable and inactive complex. The chain is Protamine-YII from Clupea harengus (Atlantic herring).